Here is a 127-residue protein sequence, read N- to C-terminus: Large ribosomal subunit protein bL12 (127 aa).

The protein belongs to the bacterial ribosomal protein bL12 family. As to quaternary structure, homodimer. Part of the ribosomal stalk of the 50S ribosomal subunit. Forms a multimeric L10(L12)X complex, where L10 forms an elongated spine to which 2 to 4 L12 dimers bind in a sequential fashion. Binds GTP-bound translation factors.

In terms of biological role, forms part of the ribosomal stalk which helps the ribosome interact with GTP-bound translation factors. Is thus essential for accurate translation. This Pelobacter propionicus (strain DSM 2379 / NBRC 103807 / OttBd1) protein is Large ribosomal subunit protein bL12.